The sequence spans 403 residues: Calcium-responsive transactivator (403 aa).

An N-terminal auto-inhibitory domain region spans residues 1-148; the sequence is MSVAFASARP…TLPTTTMSMA (148 aa). The SH2-binding motif lies at 50–53; that stretch reads YQQI. Disordered regions lie at residues 72–111, 152–171, 224–303, and 318–403; these read QSLL…ALGS, HGSA…VPMQ, NQSS…RTFE, and SQQQ…NYQQ. 2 stretches are compositionally biased toward polar residues: residues 92–105 and 161–171; these read QTGP…QGNL and TVPSSQNVPMQ. The tract at residues 149 to 238 is methionine-rich intra-molecular domain; that stretch reads VSTHGSAPGY…GSSMMGQRPL (90 aa). The span at 224-235 shows a compositional bias: low complexity; that stretch reads NQSSQGSSMMGQ. The tract at residues 252–324 is MFD domain; it reads YLGQEEYYSE…AQYSQQQTGY (73 aa). Residues 263–277 show a composition bias toward polar residues; the sequence is YGHSQGSSEAMTPQY. Low complexity predominate over residues 286–296; it reads YSYQQSSYGEQ. A necessary for nuclear localization region spans residues 341–403; the sequence is NQQNYPGQQQ…EQGQYGNYQQ (63 aa). The short motif at 360–363 is the SH2-binding element; the sequence is SQYS. Positions 378–386 match the SH3-binding motif; sequence TSQTTSTAQ. The short motif at 398–401 is the SH2-binding element; sequence YGNY.

This sequence belongs to the SS18 family. Homodimer.

It is found in the nucleus. Its function is as follows. Transcriptional activator which may be required for calcium-dependent dendritic growth and branching in cortical neurons. The polypeptide is Calcium-responsive transactivator (ss18l1) (Xenopus laevis (African clawed frog)).